Here is a 162-residue protein sequence, read N- to C-terminus: Interleukin-15 (162 aa).

Positions 1-29 (MRILKPYLRSTSIQCYLCLLLNSHFLTEA) are cleaved as a signal peptide. Residues 30–48 (CIPVFILSCINAGLPKTEA) constitute a propeptide that is removed on maturation. Cystine bridges form between C83/C133 and C90/C136. 2 N-linked (GlcNAc...) asparagine glycosylation sites follow: N104 and N127.

Belongs to the IL-15/IL-21 family.

It localises to the secreted. Functionally, cytokine that plays a major role in the development of inflammatory and protective immune responses to microbial invaders and parasites by modulating immune cells of both the innate and adaptive immune systems. Stimulates the proliferation of natural killer cells, T-cells and B-cells and promotes the secretion of several cytokines. In monocytes, induces the production of IL8 and monocyte chemotactic protein 1/CCL2, two chemokines that attract neutrophils and monocytes respectively to sites of infection. Unlike most cytokines, which are secreted in soluble form, IL15 is expressed in association with its high affinity IL15RA on the surface of IL15-producing cells and delivers signals to target cells that express IL2RB and IL2RG receptor subunits. Binding to its receptor triggers the phosphorylation of JAK1 and JAK3 and the recruitment and subsequent phosphorylation of signal transducer and activator of transcription-3/STAT3 and STAT5. In mast cells, induces the rapid tyrosine phosphorylation of STAT6 and thereby controls mast cell survival and release of cytokines such as IL4. In Felis catus (Cat), this protein is Interleukin-15 (IL15).